Here is a 288-residue protein sequence, read N- to C-terminus: Cyclic UMP-AMP synthase (288 aa).

Positions 1-23 (MPVPESQLERWSHQGATTTAKKT) are disordered. Q46 is a UTP binding site. 46–48 (QGS) is an ATP binding site. Mg(2+)-binding residues include D60 and D62. Residues D62 and 116–120 (RKTLK) each bind UTP. Position 129 (D129) interacts with Mg(2+). N166 serves as a coordination point for UTP. Residues K194, S212, and E265 each coordinate ATP.

The protein belongs to the CD-NTase family. E01 subfamily. Mg(2+) is required as a cofactor.

The enzyme catalyses UTP + ATP = 3',3'-cUAMP + 2 diphosphate. Its function is as follows. Cyclic nucleotide synthase (second messenger synthase) of a CBASS antivirus system. CBASS (cyclic oligonucleotide-based antiphage signaling system) provides immunity against bacteriophage. The CD-NTase protein synthesizes cyclic nucleotides in response to infection; these serve as specific second messenger signals. The signals activate a diverse range of effectors, leading to bacterial cell death and thus abortive phage infection. A type I-B(UU) CBASS system. In terms of biological role, cyclic dinucleotide synthase that catalyzes the synthesis of 3'3'-cyclic UMP-AMP (cUMP-AMP) from UTP and ATP, a second messenger for cell signal transduction. The sequence is that of Cyclic UMP-AMP synthase from Rhodothermus marinus (strain SG0.5JP17-172).